The chain runs to 203 residues: Small ribosomal subunit protein uS4c (203 aa).

The tract at residues 18-42 (LPGLTSKRPKNRKDSMNMNRSSSRK) is disordered. Over residues 33–42 (MNMNRSSSRK) the composition is skewed to polar residues. The region spanning 91–152 (MRLDNIIFRL…QPRLRAIIKK (62 aa)) is the S4 RNA-binding domain.

It belongs to the universal ribosomal protein uS4 family. As to quaternary structure, part of the 30S ribosomal subunit. Contacts protein S5. The interaction surface between S4 and S5 is involved in control of translational fidelity.

It is found in the plastid. The protein localises to the chloroplast. Its function is as follows. One of the primary rRNA binding proteins, it binds directly to 16S rRNA where it nucleates assembly of the body of the 30S subunit. Functionally, with S5 and S12 plays an important role in translational accuracy. The polypeptide is Small ribosomal subunit protein uS4c (rps4) (Pinus koraiensis (Korean pine)).